Consider the following 308-residue polypeptide: Porphobilinogen deaminase (308 aa).

Cysteine 241 is modified (S-(dipyrrolylmethanemethyl)cysteine).

It belongs to the HMBS family. Monomer. Requires dipyrromethane as cofactor.

The catalysed reaction is 4 porphobilinogen + H2O = hydroxymethylbilane + 4 NH4(+). The protein operates within porphyrin-containing compound metabolism; protoporphyrin-IX biosynthesis; coproporphyrinogen-III from 5-aminolevulinate: step 2/4. In terms of biological role, tetrapolymerization of the monopyrrole PBG into the hydroxymethylbilane pre-uroporphyrinogen in several discrete steps. This Staphylococcus aureus (strain Mu50 / ATCC 700699) protein is Porphobilinogen deaminase.